Consider the following 197-residue polypeptide: 22.7 kDa class IV heat shock protein (197 aa).

The N-terminal stretch at 1-28 (MSLKPLNMLLVPFLLLILAADFPLKAKA) is a signal peptide. The 117-residue stretch at 68–184 (PSITLSHARV…GPRMVSIVEE (117 aa)) folds into the sHSP domain. The short motif at 194–197 (DELK) is the Prevents secretion from ER element.

Belongs to the small heat shock protein (HSP20) family. Forms oligomeric structures.

The protein resides in the endoplasmic reticulum lumen. The protein is 22.7 kDa class IV heat shock protein (HSP22.7) of Pisum sativum (Garden pea).